The sequence spans 113 residues: MNTVRVTFLLVFVLAVSLGQADKDENRMEMQEKTEQGKSYLDFAENLLLQKLEELEAKLPEEDSEESRNSRQKRCIGEGVPCDENDPRCCSGLVCLKPTLHGIWYKSYYCYKK.

The signal sequence occupies residues 1 to 21 (MNTVRVTFLLVFVLAVSLGQA). Residues 22–74 (DKDENRMEMQEKTEQGKSYLDFAENLLLQKLEELEAKLPEEDSEESRNSRQKR) constitute a propeptide that is removed on maturation. Residues 58-69 (KLPEEDSEESRN) are compositionally biased toward basic and acidic residues. Residues 58–82 (KLPEEDSEESRNSRQKRCIGEGVPC) form a disordered region. Intrachain disulfides connect cysteine 75-cysteine 90, cysteine 82-cysteine 95, and cysteine 89-cysteine 110.

The protein belongs to the neurotoxin 14 (magi-1) family. 01 (HNTX-16) subfamily. As to expression, expressed by the venom gland.

Its subcellular location is the secreted. Functionally, probable ion channel inhibitor. This Cyriopagopus hainanus (Chinese bird spider) protein is U11-theraphotoxin-Hhn1a.